The following is a 428-amino-acid chain: Enolase (428 aa).

Glutamine 173 serves as a coordination point for (2R)-2-phosphoglycerate. The active-site Proton donor is the glutamate 217. Positions 253, 294, and 320 each coordinate Mg(2+). (2R)-2-phosphoglycerate-binding residues include lysine 345, arginine 374, serine 375, and lysine 396. Lysine 345 functions as the Proton acceptor in the catalytic mechanism.

Belongs to the enolase family. Requires Mg(2+) as cofactor.

It is found in the cytoplasm. It localises to the secreted. The protein localises to the cell surface. The enzyme catalyses (2R)-2-phosphoglycerate = phosphoenolpyruvate + H2O. Its pathway is carbohydrate degradation; glycolysis; pyruvate from D-glyceraldehyde 3-phosphate: step 4/5. In terms of biological role, catalyzes the reversible conversion of 2-phosphoglycerate (2-PG) into phosphoenolpyruvate (PEP). It is essential for the degradation of carbohydrates via glycolysis. This Methanosarcina mazei (strain ATCC BAA-159 / DSM 3647 / Goe1 / Go1 / JCM 11833 / OCM 88) (Methanosarcina frisia) protein is Enolase.